Consider the following 434-residue polypeptide: Lipoyl synthase, mitochondrial (434 aa).

The transit peptide at 1–31 directs the protein to the mitochondrion; the sequence is MAASARGLRTLQSAHSSTTVPRLQLAVSRCY. Residues 34 to 54 are compositionally biased toward low complexity; sequence TTSPDPPITNSSNSSNSTPTP. Residues 34–55 form a disordered region; sequence TTSPDPPITNSSNSSNSTPTPK. 7 residues coordinate [4Fe-4S] cluster: C144, C149, C155, C175, C179, C182, and S390. The 222-residue stretch at 158 to 379 folds into the Radical SAM core domain; that stretch reads GSSKSAATAT…KERALEMGFL (222 aa).

Belongs to the radical SAM superfamily. Lipoyl synthase family. [4Fe-4S] cluster is required as a cofactor.

It is found in the mitochondrion. It carries out the reaction [[Fe-S] cluster scaffold protein carrying a second [4Fe-4S](2+) cluster] + N(6)-octanoyl-L-lysyl-[protein] + 2 oxidized [2Fe-2S]-[ferredoxin] + 2 S-adenosyl-L-methionine + 4 H(+) = [[Fe-S] cluster scaffold protein] + N(6)-[(R)-dihydrolipoyl]-L-lysyl-[protein] + 4 Fe(3+) + 2 hydrogen sulfide + 2 5'-deoxyadenosine + 2 L-methionine + 2 reduced [2Fe-2S]-[ferredoxin]. It functions in the pathway protein modification; protein lipoylation via endogenous pathway; protein N(6)-(lipoyl)lysine from octanoyl-[acyl-carrier-protein]: step 2/2. Functionally, catalyzes the radical-mediated insertion of two sulfur atoms into the C-6 and C-8 positions of the octanoyl moiety bound to the lipoyl domains of lipoate-dependent enzymes, thereby converting the octanoylated domains into lipoylated derivatives. This Paracoccidioides brasiliensis (strain Pb03) protein is Lipoyl synthase, mitochondrial.